Reading from the N-terminus, the 376-residue chain is uncharacterized protein (376 aa).

A run of 2 helical transmembrane segments spans residues 153–173 (QGTLIKFQQILVCLAIIVLFA) and 188–208 (HRPFLIDFFTINAIFTVLAVY).

The protein resides in the membrane. This is an uncharacterized protein from Saccharomyces cerevisiae (strain ATCC 204508 / S288c) (Baker's yeast).